Reading from the N-terminus, the 910-residue chain is SWI/SNF-related matrix-associated actin-dependent regulator of chromatin subfamily A-like protein 1 (910 aa).

The tract at residues M1–I170 is disordered. S2 bears the N-acetylserine mark. 2 mediates interaction with RPA2 regions span residues S2–A30 and L5–A30. Positions L3–L28 form a coiled coil. Positions E7–W29 are enriched in basic and acidic residues. Polar residues-rich tracts occupy residues Q32–L54 and S70–T95. Basic and acidic residues predominate over residues E97–G107. A Phosphoserine modification is found at S117. Positions E120 to S131 are enriched in polar residues. The segment covering F150–A160 has biased composition (basic and acidic residues). S164 bears the Phosphoserine mark. 2 HARP domains span residues K198–E268 and S284–P355. A Helicase ATP-binding domain is found at S402–T557. D415–T422 lines the ATP pocket. Residues D506–H509 carry the DESH box motif. The short motif at R601–M618 is the Nuclear localization signal element. The Helicase C-terminal domain occupies Y672 to A825. Residues G865 to S875 show a composition bias toward low complexity. A disordered region spans residues G865–S890.

It belongs to the SNF2/RAD54 helicase family. SMARCAL1 subfamily. As to quaternary structure, interacts with RPA2; the interaction is direct and mediates the recruitment by the RPA complex of SMARCAL1 to sites of DNA damage. In terms of processing, DNA damage-regulated phosphorylation by kinases that may include ATM, ATR and PRKDC.

The protein resides in the nucleus. The enzyme catalyses ATP + H2O = ADP + phosphate + H(+). ATP-dependent annealing helicase that binds selectively to fork DNA relative to ssDNA or dsDNA and catalyzes the rewinding of the stably unwound DNA. Rewinds single-stranded DNA bubbles that are stably bound by replication protein A (RPA). Acts throughout the genome to reanneal stably unwound DNA, performing the opposite reaction of many enzymes, such as helicases and polymerases, that unwind DNA. May play an important role in DNA damage response by acting at stalled replication forks. The chain is SWI/SNF-related matrix-associated actin-dependent regulator of chromatin subfamily A-like protein 1 (Smarcal1) from Rattus norvegicus (Rat).